We begin with the raw amino-acid sequence, 131 residues long: Small ribosomal subunit protein uS8 (131 aa).

The tract at residues 1 to 27 is disordered; it reads MSMTDPVADMLTRIRNGQRASKNEVSM.

It belongs to the universal ribosomal protein uS8 family. As to quaternary structure, part of the 30S ribosomal subunit. Contacts proteins S5 and S12.

In terms of biological role, one of the primary rRNA binding proteins, it binds directly to 16S rRNA central domain where it helps coordinate assembly of the platform of the 30S subunit. The polypeptide is Small ribosomal subunit protein uS8 (Thioalkalivibrio sulfidiphilus (strain HL-EbGR7)).